We begin with the raw amino-acid sequence, 415 residues long: Fructose-like permease IIC component (415 aa).

At 1 to 46 (MAIKKRSATVVPGASGAAAAVKNPQASKSSFWGELPQHVMSGISRM) the chain is on the cytoplasmic side. The region spanning 35–410 (LPQHVMSGIS…RLMMFRKGKL (376 aa)) is the PTS EIIC type-2 domain. The helical transmembrane segment at 47-67 (VPTLIMGGVILAFSQLIAYSW) threads the bilayer. Residues 68 to 101 (LKIPAEIGIMDALNSGKFSGFDLSLLKFAWLSQS) are Periplasmic-facing. The chain crosses the membrane as a helical span at residues 102-122 (FGGVLFGFAIPMFAAFVANSI). The Cytoplasmic segment spans residues 123–126 (GGKL). The helical transmembrane segment at 127 to 147 (AFPAGFIGGLMSTQPTQLLNF) threads the bilayer. Residues 148 to 157 (DPSTMQWATS) lie on the Periplasmic side of the membrane. The helical transmembrane segment at 158-178 (SPVPSTFIGALIISIVAGYLV) threads the bilayer. Residues 179–197 (KWMNQKIQLPDFLLAFKTT) lie on the Cytoplasmic side of the membrane. A helical transmembrane segment spans residues 198–218 (FLLPILSAIFVMLAMYYVITP). Residues 219–237 (FGGWINGGIRTVLTAAGEK) are Periplasmic-facing. Residues 238 to 258 (GALMYAMGIAAATAIDLGGPI) traverse the membrane as a helical segment. The Cytoplasmic portion of the chain corresponds to 259–276 (NKAAGFVAFSFTTDHVLP). A helical transmembrane segment spans residues 277 to 297 (VTARSIAIVIPPIGLGLATII). Residues 298-318 (DRRLTGKRLFNAQLYPQGKTA) lie on the Periplasmic side of the membrane. A helical membrane pass occupies residues 319 to 339 (MFLAFMGISEGAIPFALESPI). The Cytoplasmic segment spans residues 340–341 (TA). A helical transmembrane segment spans residues 342 to 362 (IPSYMVGAIVGSTAAVWLGAV). At 363–378 (QWFPESAIWAWPLVTN) the chain is on the periplasmic side. A helical membrane pass occupies residues 379 to 399 (LGVYMAGIALGAVITALMVVF). The Cytoplasmic portion of the chain corresponds to 400–415 (LRLMMFRKGKLLIDSL).

It is found in the cell inner membrane. Its function is as follows. The phosphoenolpyruvate-dependent sugar phosphotransferase system (PTS), a major carbohydrate active -transport system, catalyzes the phosphorylation of incoming sugar substrates concomitant with their translocation across the cell membrane. The polypeptide is Fructose-like permease IIC component (fryC) (Escherichia coli O157:H7).